Here is a 277-residue protein sequence, read N- to C-terminus: (-)-trans-carveol dehydrogenase (277 aa).

10–32 is an NAD(+) binding site; sequence LITGAARGQGRSHAIKLAEEGAD. Residue serine 156 coordinates substrate. The active-site Proton acceptor is the tyrosine 169.

Belongs to the short-chain dehydrogenases/reductases (SDR) family. As to quaternary structure, homotetramer.

It catalyses the reaction (1S,5R)-carveol + NAD(+) = (R)-carvone + NADH + H(+). The enzyme catalyses (1S,5S)-carveol + NAD(+) = (S)-carvone + NADH + H(+). Its pathway is terpene metabolism; limonene degradation. Its activity is regulated as follows. Competitively inhibited by the product (S)- or (R)-carvone. Functionally, catalyzes the oxidation of carveol to carvone, with a strong stereoselectivity since it efficiently converts only the (6S)-stereoisomers, of which (-)-(4R,6S)-trans-carveol is the better substrate. Displays a broad substrate specificity with a preference for substituted cyclohexanols, and does not catalyze the oxidation of primary or short chain aliphatic secondary alcohols. Is also able, albeit more slowly, to oxidize limonene-1,2-diol into 1-hydroxy-2-oxolimonene. The chain is (-)-trans-carveol dehydrogenase (limC) from Rhodococcus erythropolis (Arthrobacter picolinophilus).